The chain runs to 413 residues: Hemolin (413 aa).

The first 18 residues, 1–18, serve as a signal peptide directing secretion; sequence MASKSLVVLSACIIIGSA. Ig-like C2-type domains lie at 25–112, 122–211, 233–322, and 327–413; these read PVLK…RVIS, PAKT…GEVR, PQYL…LKVT, and PKYV…VQVN. Cystine bridges form between cysteine 46/cysteine 97, cysteine 140/cysteine 199, cysteine 252/cysteine 305, and cysteine 349/cysteine 395. Asparagine 283 carries an N-linked (GlcNAc...) asparagine glycan.

This sequence belongs to the hemolin family. In terms of tissue distribution, expressed in larval bristles.

The protein localises to the secreted. Its activity is regulated as follows. Increased activity in presence of phospholipids (low concentrations) and calcium ions. Inhibited by PMSF. Not affected by EDTA and E-64. Bristle toxin involved in caterpillar defense by participating in hemorrhagic syndrome characterized by a consumptive coagulopathy. Exhibits procoagulant activity through selective factor X proteolytic activation. Activates factor X in a dose- and time-dependent manner but does not activate gamma-carboxyglutamic acid domainless factor X. Its activity does not depend on calcium ions. Also functions as a growth stimulator and an inhibitor of cellular death for endothelial cells. In vitro, increases proliferation of human umbilical vein endothelial cells (HUVEC) and inhibits the apoptosis induced by starvation. Also increases slightly the complement decay-accelerating factor (CD55), which protects cells from complement-mediated lysis. On the other hand, does not alter the release or expression of von Willebrand factor (VWF), tissue factor (F3), intercellular adhesion molecule-1 (ICAM1), interleukin-8 (CXCL8), and prostacyclin. Does not show fibrinolytic or fibrinogenolytic activities. The polypeptide is Hemolin (Lonomia obliqua (Moth)).